Consider the following 554-residue polypeptide: Afadin- and alpha-actinin-binding protein A (554 aa).

Coiled coils occupy residues 122–287 (LEYL…SQRK) and 359–449 (ENGL…AIRL). The interval 508–528 (LASSGDYSRRPSKALPITSSS) is disordered.

Belongs to the ADIP family. In terms of assembly, interacts with WRAP73.

The protein resides in the cell junction. It localises to the adherens junction. The protein localises to the cytoplasm. Its subcellular location is the cytoskeleton. It is found in the microtubule organizing center. The protein resides in the centrosome. It localises to the centriolar satellite. In terms of biological role, belongs to an adhesion system, which plays a role in the organization of homotypic, interneuronal and heterotypic cell-cell adherens junctions (AJs). Involved in cell movement. Acts as a centrosome maturation factor, probably by maintaining the integrity of the pericentriolar material and proper microtubule nucleation at mitotic spindle poles. The function seems to implicate at least in part WRAP73; the SSX2IP:WRAP73 complex is proposed to act as regulator of spindle anchoring at the mitotic centrosome. This Xenopus laevis (African clawed frog) protein is Afadin- and alpha-actinin-binding protein A (ssx2ip-a).